Consider the following 629-residue polypeptide: uncharacterized protein (629 aa).

Met1 is subject to N-acetylmethionine. The segment at Val308–Ala395 is disordered. Positions Ser322 to Ser334 are enriched in polar residues. Residues Leu451–Val587 enclose the VWFA domain.

The protein belongs to the Mg-chelatase subunits D/I family.

This is an uncharacterized protein from Mycobacterium tuberculosis (strain ATCC 25618 / H37Rv).